Reading from the N-terminus, the 196-residue chain is Penicillin-binding protein activator LpoB (196 aa).

The N-terminal stretch at 1 to 16 (MKKYLGIVLMALVIAG) is a signal peptide. Cysteine 17 is lipidated: N-palmitoyl cysteine. The S-diacylglycerol cysteine moiety is linked to residue cysteine 17. The tract at residues 24-54 (TEQPATIEPAVPTPSKPQLPPSESQPLPTPP) is disordered. Positions 34–43 (VPTPSKPQLP) are enriched in pro residues.

Belongs to the LpoB family. As to quaternary structure, interacts with PBP1b.

It localises to the cell outer membrane. Its function is as follows. Regulator of peptidoglycan synthesis that is essential for the function of penicillin-binding protein 1B (PBP1b). This chain is Penicillin-binding protein activator LpoB, found in Dickeya dadantii (strain 3937) (Erwinia chrysanthemi (strain 3937)).